Reading from the N-terminus, the 50-residue chain is U23-theraphotoxin-Cg1a 2 (50 aa).

3 disulfide bridges follow: cysteine 22–cysteine 36, cysteine 29–cysteine 41, and cysteine 35–cysteine 47.

This sequence belongs to the neurotoxin 10 (Hwtx-1) family. 64 (Jztx-20) subfamily. In terms of tissue distribution, expressed by the venom gland.

The protein localises to the secreted. Functionally, probable ion channel inhibitor. The sequence is that of U23-theraphotoxin-Cg1a 2 from Chilobrachys guangxiensis (Chinese earth tiger tarantula).